Reading from the N-terminus, the 188-residue chain is Elongation factor P (188 aa).

It belongs to the elongation factor P family.

The protein localises to the cytoplasm. It functions in the pathway protein biosynthesis; polypeptide chain elongation. Involved in peptide bond synthesis. Stimulates efficient translation and peptide-bond synthesis on native or reconstituted 70S ribosomes in vitro. Probably functions indirectly by altering the affinity of the ribosome for aminoacyl-tRNA, thus increasing their reactivity as acceptors for peptidyl transferase. This chain is Elongation factor P, found in Rickettsia typhi (strain ATCC VR-144 / Wilmington).